The following is a 1052-amino-acid chain: Multidrug resistance protein MdtB (1052 aa).

Transmembrane regions (helical) follow at residues 15 to 37 (LFIL…GIIG), 345 to 362 (FELL…YLFL), 367 to 389 (ATII…MYFL), 396 to 418 (LTLM…VIEN), 438 to 460 (GEIG…PLLF), 472 to 494 (FAVT…TPMM), 535 to 557 (HPWL…YLLI), 867 to 889 (LWLI…ESFI), 909 to 931 (LMLT…IGIV), 968 to 990 (ILMT…GVGA), and 1000 to 1022 (MVGG…YLLF). The interval 1032-1052 (KNRHRDEDIDSSELLNGQEPQ) is disordered.

Belongs to the resistance-nodulation-cell division (RND) (TC 2.A.6) family. MdtB subfamily. Part of a tripartite efflux system composed of MdtA, MdtB and MdtC. MdtB forms a heteromultimer with MdtC.

Its subcellular location is the cell inner membrane. In Yersinia pestis, this protein is Multidrug resistance protein MdtB.